The sequence spans 157 residues: Cyclic pyranopterin monophosphate synthase (157 aa).

Residues 74–76 (MCH) and 112–113 (ME) each bind substrate. The active site involves aspartate 127.

Belongs to the MoaC family. Homohexamer; trimer of dimers.

It catalyses the reaction (8S)-3',8-cyclo-7,8-dihydroguanosine 5'-triphosphate = cyclic pyranopterin phosphate + diphosphate. Its pathway is cofactor biosynthesis; molybdopterin biosynthesis. Its function is as follows. Catalyzes the conversion of (8S)-3',8-cyclo-7,8-dihydroguanosine 5'-triphosphate to cyclic pyranopterin monophosphate (cPMP). This Campylobacter jejuni subsp. doylei (strain ATCC BAA-1458 / RM4099 / 269.97) protein is Cyclic pyranopterin monophosphate synthase.